The following is a 201-amino-acid chain: Recombination protein RecR (201 aa).

The C4-type zinc finger occupies 57–72 (CADCRTFTEQEVCNIC). In terms of domain architecture, Toprim spans 81-176 (GQICVVESPA…DASRIAHGVP (96 aa)).

Belongs to the RecR family.

Its function is as follows. May play a role in DNA repair. It seems to be involved in an RecBC-independent recombinational process of DNA repair. It may act with RecF and RecO. The protein is Recombination protein RecR of Klebsiella pneumoniae subsp. pneumoniae (strain ATCC 700721 / MGH 78578).